A 420-amino-acid chain; its full sequence is Tyrosine--tRNA ligase (420 aa).

Y38 contacts L-tyrosine. Residues P43–H52 carry the 'HIGH' region motif. Residues Y169 and Q173 each coordinate L-tyrosine. A 'KMSKS' region motif is present at residues K231–S235. K234 is an ATP binding site. The S4 RNA-binding domain maps to K353 to I419.

This sequence belongs to the class-I aminoacyl-tRNA synthetase family. TyrS type 1 subfamily. In terms of assembly, homodimer.

Its subcellular location is the cytoplasm. It carries out the reaction tRNA(Tyr) + L-tyrosine + ATP = L-tyrosyl-tRNA(Tyr) + AMP + diphosphate + H(+). In terms of biological role, catalyzes the attachment of tyrosine to tRNA(Tyr) in a two-step reaction: tyrosine is first activated by ATP to form Tyr-AMP and then transferred to the acceptor end of tRNA(Tyr). The chain is Tyrosine--tRNA ligase from Lactobacillus acidophilus (strain ATCC 700396 / NCK56 / N2 / NCFM).